The primary structure comprises 1252 residues: Nephrin (1252 aa).

A signal peptide spans 1-35 (MGAKRVTVRGARTSPIHRMSSLTPLLLMGMLTSGL). Residues 36-1078 (AESPVPTSAP…PGPPRLPLLP (1043 aa)) lie on the Extracellular side of the membrane. 6 Ig-like C2-type domains span residues 39–144 (PVPT…VILS), 149–247 (PKVL…ASFT), 256–347 (PPVI…RSIT), 354–448 (PSAI…KSLT), 454–554 (PAQK…TQLV), and 558–649 (PPTN…ETVS). N-linked (GlcNAc...) asparagine glycosylation is present at asparagine 54. Cystine bridges form between cysteine 67–cysteine 125, cysteine 174–cysteine 231, and cysteine 279–cysteine 331. Asparagine 370 carries an N-linked (GlcNAc...) asparagine glycan. A disulfide bridge links cysteine 375 with cysteine 431. The residue at position 446 (serine 446) is a Phosphoserine. The cysteines at positions 479 and 542 are disulfide-linked. 4 N-linked (GlcNAc...) asparagine glycosylation sites follow: asparagine 561, asparagine 578, asparagine 591, and asparagine 722. Cysteine 581 and cysteine 637 are oxidised to a cystine. Ig-like C2-type domains follow at residues 754–846 (PTIR…LVRL) and 852–953 (PQVD…VSIS). 2 disulfides stabilise this stretch: cysteine 775/cysteine 830 and cysteine 877/cysteine 934. The 96-residue stretch at 957–1052 (PPLGLKVVSI…IQVSVTTPGP (96 aa)) folds into the Fibronectin type-III domain. Residues 1043–1067 (IQVSVTTPGPDQAPEDTDHQLPTEL) form a disordered region. A helical membrane pass occupies residues 1079–1099 (VLFAVGGLLLLSNASCVGGLL). Topologically, residues 1100–1252 (WRRRLRRLAE…LPFELRGHLV (153 aa)) are cytoplasmic. Serine 1112 carries the phosphoserine modification. The segment covering 1113-1127 (EKTEAGSEDRIRNEY) has biased composition (basic and acidic residues). Positions 1113–1144 (EKTEAGSEDRIRNEYEESQWTGDRDTRSSTVS) are disordered. Threonine 1115 bears the Phosphothreonine mark. The residue at position 1119 (serine 1119) is a Phosphoserine. Residue tyrosine 1204 is modified to Phosphotyrosine; by FYN.

The protein belongs to the immunoglobulin superfamily. In terms of assembly, interacts with NPHS2 and with CD2AP (via C-terminal domain). Self-associates (via the Ig-like domains). Also interacts (via the Ig-like domains) with KIRREL1/NEPH1 and KIRREL2; the interaction with KIRREL1 is dependent on KIRREL1 glycosylation. Interacts with KIRREL3. Interacts with MAGI1 (via PDZ 2 and 3 domains) forming a tripartite complex with IGSF5/JAM4. Interacts with DDN; the interaction is direct. Forms a complex with ACTN4, CASK, IQGAP1, MAGI2, SPTAN1 and SPTBN1. Interacts with phosphatidylinositol 3-kinase regulatory subunit PIK3R1; the interaction is reduced by high glucose levels. Phosphorylated at Tyr-1204 by FYN, leading to the recruitment and activation of phospholipase C-gamma-1/PLCG1. Tyrosine phosphorylation is reduced by high glucose levels. Dephosphorylated by tensin TNS2 which leads to reduced binding of NPHN1 to PIK3R1. As to expression, strongly expressed in the podocytes of kidney glomeruli (at protein level) and at lower levels in the spleen.

It localises to the cell membrane. In terms of biological role, seems to play a role in the development or function of the kidney glomerular filtration barrier. Regulates glomerular vascular permeability. May anchor the podocyte slit diaphragm to the actin cytoskeleton. Plays a role in skeletal muscle formation through regulation of myoblast fusion. The protein is Nephrin (Nphs1) of Rattus norvegicus (Rat).